The primary structure comprises 344 residues: MKKLLNTVYVTTEGTGLRKDGENLVAELDGVQKGRVPLHMVGSVVVFGGTYVSPGLMGACAAHGITIVLLDRVGRFQARVEGPVAGNVLLRRAQYKASEAPEDIVKSLILGKVSNQRAVLLRALRDHGADFPAAEALAVKDAIDRMAHILRKVGASAEDADHLRGAEGEAASLYFGVFGQLIRSPDGDFAFRGRSRRPPLDPTNALLSFLYTLLTHDCRSACESVGLDPAVGFLHRDRPGRPSLALDLMEELRPVLVDRLALSLINRRQLRATDFQRLDGGAVLLTDEARKTVLSAWQERKKQERRHPFLEESAPLGLVPYLQAQMLARHLRGDLDAYPPWFWK.

Positions 167, 235, and 250 each coordinate Mn(2+).

The protein belongs to the CRISPR-associated endonuclease Cas1 family. Homodimer, forms a heterotetramer with a Cas2 homodimer. The cofactor is Mg(2+). Mn(2+) serves as cofactor.

Its function is as follows. CRISPR (clustered regularly interspaced short palindromic repeat), is an adaptive immune system that provides protection against mobile genetic elements (viruses, transposable elements and conjugative plasmids). CRISPR clusters contain spacers, sequences complementary to antecedent mobile elements, and target invading nucleic acids. CRISPR clusters are transcribed and processed into CRISPR RNA (crRNA). Acts as a dsDNA endonuclease. Involved in the integration of spacer DNA into the CRISPR cassette. This is CRISPR-associated endonuclease Cas1 2 from Rhodospirillum rubrum (strain ATCC 11170 / ATH 1.1.1 / DSM 467 / LMG 4362 / NCIMB 8255 / S1).